Reading from the N-terminus, the 96-residue chain is MPVLAKAALQQALEQRSGWTVVDGQISKTYGLATFPFAIEFVRRIADAAEEVNHHPDIDIRYNKVTIALSTHDEKGITEKDFGLADTIDRIFAAAQ.

The protein belongs to the pterin-4-alpha-carbinolamine dehydratase family.

It catalyses the reaction (4aS,6R)-4a-hydroxy-L-erythro-5,6,7,8-tetrahydrobiopterin = (6R)-L-erythro-6,7-dihydrobiopterin + H2O. The protein is Putative pterin-4-alpha-carbinolamine dehydratase of Herpetosiphon aurantiacus (strain ATCC 23779 / DSM 785 / 114-95).